Consider the following 668-residue polypeptide: MVNIQTNTSYIFPQTQSTVLPDPSKFFSSNLLSSPLPTNSFFQNFVLKNGDQQEYIHPYLIKSSNSSLSLSYPSRQASSAVIFQVFNPDLTISAPQGPKQGPPGKHLISSYSDLSVTLDFPSSNLSFFLVRGSPYLTVSVTQPTPLSITTIHSILSFSSNDSNTKYTFQFNNGQTWLLYATSPIKLNHTLSEITSNAFSGIIRIALLPDSDSKHEAVLDKYSSCYPVSGKAVFREPFCVEYNWEKKDSGDLLLLAHPLHVQLLRNGDNDVKILEDLKYKSIDGDLVGVVGDSWVLKTDPLFVTWHSIKGIKEESHDEIVSALSKDVESLDSSSITTTESYFYGKLIARAARLVLIAEELNYPDVIPKVRNFLKETIEPWLEGTFSGNGFLHDEKWGGIITQKGSTDAGGDFGFGIYNDHHYHLGYFIYGIAVLTKLDPAWGRKYKPQAYSIVQDFLNLDTKLNSNYTRLRCFDPYVLHSWAGGLTEFTDGRNQESTSEAVSAYYSAALMGLAYGDAPLVALGSTLTALEIEGTKMWWHVKEGGTLYEKEFTQENRVMGVLWSNKRDTGLWFAPAEWKECRLGIQLLPLAPISEAIFSNVDFVKELVEWTLPALDREGGVGEGWKGFVYALEGVYDNESALQKIRNLKGFDGGNSLTNLLWWIHSRSDE.

The interval valine 2–proline 208 is beta-sandwich subdomain. In terms of domain architecture, GH81 spans valine 2–glutamate 668. N-linked (GlcNAc...) asparagine glycans are attached at residues asparagine 65, asparagine 124, asparagine 160, and asparagine 187. Positions aspartate 209–proline 299 are alpha/beta subdomain. Residues glutamate 240–lysine 443 are involved in beta-glucan binding. Residues glycine 309–glutamate 668 form a (alpha/beta)6 barrel subdomain region. Aspartate 418 is a catalytic residue. Position 422 (histidine 422) interacts with (1,3-beta-D-glucosyl)n. The N-linked (GlcNAc...) asparagine glycan is linked to asparagine 465. Active-site residues include glutamate 494 and glutamate 498. Residues glutamate 494 and glutamate 498 each contribute to the (1,3-beta-D-glucosyl)n site. The interval lysine 564–aspartate 566 is may provide specificity for triple-helical beta-glucan.

The protein belongs to the glycosyl hydrolase 81 family. Expressed in roots (at protein level). Expressed in leaves.

It localises to the secreted. Its subcellular location is the cell wall. The enzyme catalyses Hydrolysis of (1-&gt;3)-beta-D-glucosidic linkages in (1-&gt;3)-beta-D-glucans.. Its function is as follows. Cleaves internal linkages in 1,3-beta-glucan. Beta-glucan, a polysaccharide constituent of fungal cell walls, can act as an elicitor in the plant, triggering defense responses including phytoalexin synthesis. The polypeptide is Glucan endo-1,3-beta-D-glucosidase (Glycine max (Soybean)).